Reading from the N-terminus, the 330-residue chain is Protein pelota homolog (330 aa).

Belongs to the eukaryotic release factor 1 family. Pelota subfamily. Monomer. Requires a divalent metal cation as cofactor.

It localises to the cytoplasm. Functionally, may function in recognizing stalled ribosomes, interact with stem-loop structures in stalled mRNA molecules, and effect endonucleolytic cleavage of the mRNA. May play a role in the release non-functional ribosomes and degradation of damaged mRNAs. Has endoribonuclease activity. The protein is Protein pelota homolog of Pyrobaculum neutrophilum (strain DSM 2338 / JCM 9278 / NBRC 100436 / V24Sta) (Thermoproteus neutrophilus).